Here is a 262-residue protein sequence, read N- to C-terminus: uncharacterized protein (262 aa).

Residues His7, His9, Glu98, His138, His162, and Asp212 each contribute to the a divalent metal cation site.

This sequence belongs to the metallo-dependent hydrolases superfamily. TatD-type hydrolase family. A divalent metal cation is required as a cofactor.

This is an uncharacterized protein from Haemophilus influenzae (strain ATCC 51907 / DSM 11121 / KW20 / Rd).